Here is a 528-residue protein sequence, read N- to C-terminus: Calcium-dependent protein kinase 17 (528 aa).

Residues 1–65 (MGNCCSHGRD…GPIGPVLGRP (65 aa)) form a disordered region. Glycine 2 carries the N-myristoyl glycine lipid modification. Positions 20-45 (NGASASNAANSTGPTAEASVPQSKHA) are enriched in low complexity. In terms of domain architecture, Protein kinase spans 73-331 (YSLGKELGRG…AAQVLNHPWI (259 aa)). Residues 79–87 (LGRGQFGVT) and lysine 102 each bind ATP. Aspartate 197 acts as the Proton acceptor in catalysis. Serine 237 carries the phosphoserine modification. Positions 337–367 (APDVPLDNAVMSRLKQFKAMNNFKKVALRVI) are autoinhibitory domain. EF-hand domains lie at 374-409 (EEIM…QGTR), 410-445 (LSEY…INRL), 446-481 (DREE…FGMN), and 485-516 (DIKE…GNPD). Ca(2+)-binding residues include aspartate 387, aspartate 389, serine 391, threonine 393, glutamate 398, aspartate 423, aspartate 425, asparagine 427, threonine 429, glutamate 434, aspartate 459, aspartate 461, serine 463, tyrosine 465, glutamate 470, aspartate 494, aspartate 496, aspartate 498, arginine 500, and glutamate 505.

Belongs to the protein kinase superfamily. Ser/Thr protein kinase family. CDPK subfamily.

The protein localises to the membrane. It catalyses the reaction L-seryl-[protein] + ATP = O-phospho-L-seryl-[protein] + ADP + H(+). It carries out the reaction L-threonyl-[protein] + ATP = O-phospho-L-threonyl-[protein] + ADP + H(+). Its activity is regulated as follows. Activated by calcium. Autophosphorylation may play an important role in the regulation of the kinase activity. May play a role in signal transduction pathways that involve calcium as a second messenger. This chain is Calcium-dependent protein kinase 17 (CPK17), found in Arabidopsis thaliana (Mouse-ear cress).